Consider the following 134-residue polypeptide: Replication enhancer protein (134 aa).

Belongs to the geminiviridae replication enhancer protein family. As to quaternary structure, homooligomer. Interacts with the replication-associated protein (REP). Interacts with host proliferating cell nuclear antigen (PCNA). Interacts with host retinoblastoma-related protein 1 (RBR1), and may thereby deregulate the host cell cycle. Oligomerization and interaction with PCNA are necessary for optimal replication enhancement.

Increases viral DNA accumulation. Enhances infectivity and symptom expression. This Tomato pseudo-curly top virus (TPCTV) protein is Replication enhancer protein.